Consider the following 420-residue polypeptide: uncharacterized protein (420 aa).

This sequence belongs to the Rv1128c/1148c/1588c/1702c/1945/3466 family.

This is an uncharacterized protein from Mycobacterium tuberculosis (strain CDC 1551 / Oshkosh).